Consider the following 570-residue polypeptide: BRICHOS domain-containing protein C09F5.1 (570 aa).

The Cytoplasmic segment spans residues Met-1–Cys-288. Composition is skewed to polar residues over residues Ser-93–Ser-107 and Thr-228–Ser-246. Disordered stretches follow at residues Ser-93–Arg-116 and Ser-218–Glu-248. A helical transmembrane segment spans residues Cys-289–Phe-309. The Extracellular portion of the chain corresponds to Asn-310–Val-570. The BRICHOS domain maps to Thr-369–Tyr-461. A disulfide bridge connects residues Cys-395 and Cys-455.

Its subcellular location is the membrane. The chain is BRICHOS domain-containing protein C09F5.1 from Caenorhabditis elegans.